The primary structure comprises 280 residues: Four and a half LIM domains protein 3 (280 aa).

Ser2 is modified (N-acetylserine). The C4-type zinc-finger motif lies at 7-31 (CAKCNESLYGRKYIQTDSGPYCVPC). LIM zinc-binding domains lie at 40 to 92 (CAEC…CNDC) and 101 to 153 (CSAC…CVPC). Lys157 bears the N6-acetyllysine mark. 2 LIM zinc-binding domains span residues 162-212 (CARC…CVAC) and 221-275 (CSSC…CQGC). N6-acetyllysine is present on Lys235.

As to quaternary structure, interacts with SOX15; the interaction recruits FHL3 to FOXK1 promoters where it acts as a transcriptional coactivator of FOXK1. Expressed only in skeletal muscle.

It is found in the nucleus. The protein localises to the cytoplasm. In terms of biological role, recruited by SOX15 to FOXK1 promoters where it acts as a transcriptional coactivator of FOXK1. This Homo sapiens (Human) protein is Four and a half LIM domains protein 3 (FHL3).